We begin with the raw amino-acid sequence, 435 residues long: T-cell defective protein 2 (435 aa).

The tract at residues 65-146 (NASTSFQSQP…KTPDSLRKSI (82 aa)) is disordered. The stretch at 322 to 352 (TKISAKKEKEQKKSAAKEAALKEAKEKEMRI) forms a coiled coil. The disordered stretch occupies residues 393-419 (FFKANPPPAPRAPQAPELASGPRRIPT).

As to expression, strongly expressed in the cytoplasm of the pharynx muscle cells and several head neurons, probably the IL1s or IL2s, throughout development. Also expressed in some other unidentified neurons in the tail region. Weakly expressed in the nuclei of the T-cells and the T-cell daughters. Not expressed in gonads and in P12 cell.

The protein resides in the nucleus. The protein localises to the cytoplasm. Its function is as follows. May act synergistically with the Wnt pathways to control T-cell fate specification, gonad development, and P12 cell fate specification. Required for the distribution of pop-1 and tlp-1 proteins. This is T-cell defective protein 2 (tcl-2) from Caenorhabditis elegans.